Consider the following 129-residue polypeptide: Iron-sulfur cluster assembly 1 homolog, mitochondrial (129 aa).

Residues 1 to 12 constitute a mitochondrion transit peptide; it reads MASSVVRATVRA. Positions 57, 121, and 123 each coordinate Fe cation.

It belongs to the HesB/IscA family.

The protein localises to the mitochondrion. Functionally, involved in the maturation of mitochondrial 4Fe-4S proteins functioning late in the iron-sulfur cluster assembly pathway. Probably involved in the binding of an intermediate of Fe/S cluster assembly. The sequence is that of Iron-sulfur cluster assembly 1 homolog, mitochondrial (ISCA1) from Gallus gallus (Chicken).